The chain runs to 204 residues: Guanine-specific ADP-ribosyl transferase (204 aa).

An N-terminal signal peptide occupies residues 1–42 (MITTSLRRRTAAAVLSLSAVLATTAATAPGAAPAPSAAPAKA). Cys-46 and Cys-76 are disulfide-bonded. NADH-binding positions include 81–85 (RSDSR) and Lys-98. GDP is bound by residues 111–114 (VLVN), 132–134 (WYK), Trp-159, and Gln-162. The PN (phosphate-nicotinamide) loop motif lies at 132 to 136 (WYKSG). A disulfide bridge links Cys-180 with Cys-194.

This sequence belongs to the pierisin ADP-ribosyltransferase family. As to quaternary structure, monomer.

It is found in the secreted. The enzyme catalyses guanosine + NAD(+) = N(2)-(ADP-D-ribosyl)-guanosine + nicotinamide + H(+). It catalyses the reaction a 2'-deoxyguanosine in DNA + NAD(+) = an N(2)-(ADP-L-ribosyl)-2'-deoxyguanosine in DNA + nicotinamide + H(+). The catalysed reaction is 2'-deoxyguanosine + NAD(+) = N(2)-(ADP-D-ribosyl)-2'-deoxyguanosine + nicotinamide + H(+). It carries out the reaction GMP + NAD(+) = N(2)-(ADP-D-ribosyl)-GMP + nicotinamide + H(+). The enzyme catalyses GTP + NAD(+) = N(2)-(ADP-D-ribosyl)-GTP + nicotinamide + H(+). It catalyses the reaction dGMP + NAD(+) = N(2)-(ADP-D-ribosyl)-dGMP + nicotinamide + H(+). The catalysed reaction is dGTP + NAD(+) = N(2)-(ADP-D-ribosyl)-dGTP + nicotinamide + H(+). It carries out the reaction 3',5'-cyclic GMP + NAD(+) = N(2)-(ADP-D-ribosyl)-3',5'-cyclic GMP + nicotinamide + H(+). The enzyme catalyses guanine + NAD(+) = N(2)-(ADP-D-ribosyl)-guanine + nicotinamide + H(+). It catalyses the reaction GDP + NAD(+) = N(2)-(ADP-D-ribosyl)-GDP + nicotinamide + H(+). Inhibited by NADH. In terms of biological role, ADP-ribosylates the N2 amino group of guanosine, deoxyguanosine, GMP, dGMP, cGMP, GTP and dGTP; oligo-guanosine, oligo-deoxyguanosine and tRNA are ADP-ribosylated less efficiently, while dsDNA is a very poor substrate. Also acts on GDP. The chain is Guanine-specific ADP-ribosyl transferase from Streptomyces coelicolor (strain ATCC BAA-471 / A3(2) / M145).